Reading from the N-terminus, the 245-residue chain is Putative [LysW]-aminoadipate/[LysW]-glutamate kinase (245 aa).

Residues R60 and N162 each contribute to the substrate site.

This sequence belongs to the acetylglutamate kinase family. LysZ subfamily.

It is found in the cytoplasm. It catalyses the reaction [amino-group carrier protein]-C-terminal-N-(1,4-dicarboxybutan-1-yl)-L-glutamine + ATP = [amino-group carrier protein]-C-terminal-N-(1-carboxy-5-phosphooxy-5-oxopentan-1-yl)-L-glutamine + ADP. The enzyme catalyses [amino-group carrier protein]-C-terminal-gamma-(L-glutamyl)-L-glutamate + ATP = [amino-group carrier protein]-C-terminal-gamma-(5-phospho-L-glutamyl)-L-glutamate + ADP. Its pathway is amino-acid biosynthesis; L-lysine biosynthesis via AAA pathway; L-lysine from L-alpha-aminoadipate (Thermus route): step 2/5. It functions in the pathway amino-acid biosynthesis; L-arginine biosynthesis. Its function is as follows. Involved in both the arginine and lysine biosynthetic pathways. Phosphorylates the LysW-bound precursors glutamate (for arginine biosynthesis), respectively alpha-aminoadipate (for lysine biosynthesis). This chain is Putative [LysW]-aminoadipate/[LysW]-glutamate kinase, found in Pyrococcus abyssi (strain GE5 / Orsay).